The chain runs to 226 residues: MKFFIDTASLEEIQAAKDLGMLDGVTTNPSLIARIVGDASSFSYQDFREHIRRIAEIADGPVSAEVTTTDAEEMIHEGEALAAIHENVVVKCPLTIDGLKAIRHLSEKGIRTNATLVFSPNQALLAAKAGASYVSPFVGRLDDISTEGMALVEQIITIYDNYGYLTEVIVASIRHPRHVVESAMMGADIATIPFSVIRQLANHPLTDAGLKKFMEDAAILKKESDA.

The active-site Schiff-base intermediate with substrate is the Lys91.

It belongs to the transaldolase family. Type 3B subfamily.

It is found in the cytoplasm. The enzyme catalyses D-sedoheptulose 7-phosphate + D-glyceraldehyde 3-phosphate = D-erythrose 4-phosphate + beta-D-fructose 6-phosphate. The protein operates within carbohydrate degradation; pentose phosphate pathway; D-glyceraldehyde 3-phosphate and beta-D-fructose 6-phosphate from D-ribose 5-phosphate and D-xylulose 5-phosphate (non-oxidative stage): step 2/3. Its function is as follows. Transaldolase is important for the balance of metabolites in the pentose-phosphate pathway. This Chlorobium phaeobacteroides (strain DSM 266 / SMG 266 / 2430) protein is Probable transaldolase.